Here is a 102-residue protein sequence, read N- to C-terminus: Omega-hexatoxin-Hi2a (102 aa).

Residues 1–23 (MKFSKLSLTLALILTQALLVVCG) form the signal peptide. The propeptide occupies 24–56 (KINEDFMENGLESHALHDEIRKPIDTEKADAER). 3 disulfide bridges follow: C61–C75, C68–C81, and C74–C86. Residue L98 is modified to Leucine amide. A propeptide spanning residues 100 to 102 (RAL) is cleaved from the precursor.

This sequence belongs to the neurotoxin 15 family. 02 (omega-actx) subfamily. In terms of tissue distribution, expressed by the venom gland.

The protein resides in the secreted. In terms of biological role, potent inhibitor of insect, but not mammalian, voltage-gated calcium channels (Cav). The protein is Omega-hexatoxin-Hi2a of Hadronyche infensa (Fraser island funnel-web spider).